A 425-amino-acid polypeptide reads, in one-letter code: Serine--tRNA ligase (425 aa).

227 to 229 (TAE) contacts L-serine. ATP is bound by residues 258 to 260 (RRE) and Val-274. Glu-281 serves as a coordination point for L-serine. 347-350 (ETHS) is an ATP binding site. Thr-382 lines the L-serine pocket.

It belongs to the class-II aminoacyl-tRNA synthetase family. Type-1 seryl-tRNA synthetase subfamily. As to quaternary structure, homodimer. The tRNA molecule binds across the dimer.

The protein resides in the cytoplasm. The catalysed reaction is tRNA(Ser) + L-serine + ATP = L-seryl-tRNA(Ser) + AMP + diphosphate + H(+). It carries out the reaction tRNA(Sec) + L-serine + ATP = L-seryl-tRNA(Sec) + AMP + diphosphate + H(+). It functions in the pathway aminoacyl-tRNA biosynthesis; selenocysteinyl-tRNA(Sec) biosynthesis; L-seryl-tRNA(Sec) from L-serine and tRNA(Sec): step 1/1. Catalyzes the attachment of serine to tRNA(Ser). Is also able to aminoacylate tRNA(Sec) with serine, to form the misacylated tRNA L-seryl-tRNA(Sec), which will be further converted into selenocysteinyl-tRNA(Sec). The protein is Serine--tRNA ligase of Deinococcus radiodurans (strain ATCC 13939 / DSM 20539 / JCM 16871 / CCUG 27074 / LMG 4051 / NBRC 15346 / NCIMB 9279 / VKM B-1422 / R1).